Consider the following 812-residue polypeptide: Valine--tRNA ligase (812 aa).

The 'HIGH' region signature appears at 46–56; the sequence is PTVSGQLHIGH. Residues 536–540 carry the 'KMSKS' region motif; the sequence is KMSKS. Lys-539 contacts ATP.

It belongs to the class-I aminoacyl-tRNA synthetase family. ValS type 2 subfamily. In terms of assembly, monomer.

The protein localises to the cytoplasm. The catalysed reaction is tRNA(Val) + L-valine + ATP = L-valyl-tRNA(Val) + AMP + diphosphate. Catalyzes the attachment of valine to tRNA(Val). As ValRS can inadvertently accommodate and process structurally similar amino acids such as threonine, to avoid such errors, it has a 'posttransfer' editing activity that hydrolyzes mischarged Thr-tRNA(Val) in a tRNA-dependent manner. The sequence is that of Valine--tRNA ligase from Rickettsia bellii (strain OSU 85-389).